We begin with the raw amino-acid sequence, 339 residues long: Quinolinate synthase (339 aa).

Iminosuccinate contacts are provided by His63 and Ser81. Cys126 contacts [4Fe-4S] cluster. Iminosuccinate contacts are provided by residues 152–154 and Ser169; that span reads YVN. [4Fe-4S] cluster is bound at residue Cys211. Iminosuccinate is bound by residues 237–239 and Thr254; that span reads HPE. Cys297 is a [4Fe-4S] cluster binding site.

Belongs to the quinolinate synthase family. Type 2 subfamily. [4Fe-4S] cluster serves as cofactor.

It localises to the cytoplasm. It carries out the reaction iminosuccinate + dihydroxyacetone phosphate = quinolinate + phosphate + 2 H2O + H(+). The protein operates within cofactor biosynthesis; NAD(+) biosynthesis; quinolinate from iminoaspartate: step 1/1. Functionally, catalyzes the condensation of iminoaspartate with dihydroxyacetone phosphate to form quinolinate. The chain is Quinolinate synthase from Xylella fastidiosa (strain 9a5c).